Here is a 332-residue protein sequence, read N- to C-terminus: Tetraacyldisaccharide 4'-kinase (332 aa).

53-60 (SVGGNGKT) provides a ligand contact to ATP.

The protein belongs to the LpxK family.

The enzyme catalyses a lipid A disaccharide + ATP = a lipid IVA + ADP + H(+). It participates in glycolipid biosynthesis; lipid IV(A) biosynthesis; lipid IV(A) from (3R)-3-hydroxytetradecanoyl-[acyl-carrier-protein] and UDP-N-acetyl-alpha-D-glucosamine: step 6/6. Functionally, transfers the gamma-phosphate of ATP to the 4'-position of a tetraacyldisaccharide 1-phosphate intermediate (termed DS-1-P) to form tetraacyldisaccharide 1,4'-bis-phosphate (lipid IVA). This Haemophilus influenzae (strain 86-028NP) protein is Tetraacyldisaccharide 4'-kinase.